A 339-amino-acid chain; its full sequence is Deubiquitinase and deneddylase Dub2 (339 aa).

The helical transmembrane segment at 36 to 56 threads the bilayer; the sequence is IIIALFLIVISCGLILCAYTF. Residues His-203, Asp-220, and Cys-282 contribute to the active site.

It belongs to the peptidase C48 family.

It is found in the secreted. The protein localises to the host cell. It localises to the membrane. Its function is as follows. Effector proteins function to alter host cell physiology and promote bacterial survival in host tissues. This protease possesses deubiquitinating and deneddylating activities. The sequence is that of Deubiquitinase and deneddylase Dub2 (cdu2) from Chlamydia trachomatis serovar A (strain ATCC VR-571B / DSM 19440 / HAR-13).